A 1406-amino-acid polypeptide reads, in one-letter code: DNA-directed RNA polymerase subunit beta' (1406 aa).

Residues C70, C72, C85, and C88 each coordinate Zn(2+). D460, D462, and D464 together coordinate Mg(2+). The Zn(2+) site is built by C814, C888, C895, and C898.

The protein belongs to the RNA polymerase beta' chain family. In terms of assembly, the RNAP catalytic core consists of 2 alpha, 1 beta, 1 beta' and 1 omega subunit. When a sigma factor is associated with the core the holoenzyme is formed, which can initiate transcription. It depends on Mg(2+) as a cofactor. Zn(2+) is required as a cofactor.

It carries out the reaction RNA(n) + a ribonucleoside 5'-triphosphate = RNA(n+1) + diphosphate. DNA-dependent RNA polymerase catalyzes the transcription of DNA into RNA using the four ribonucleoside triphosphates as substrates. This Yersinia pseudotuberculosis serotype O:1b (strain IP 31758) protein is DNA-directed RNA polymerase subunit beta'.